The following is a 1153-amino-acid chain: Cingulin (1153 aa).

The head stretch occupies residues 1–342 (MAEPRGPVDH…LVMTTGSAKV (342 aa)). The segment at 17-37 (ITEPAGDAQMRTGRRPAKDAR) is disordered. The ZIM signature appears at 38 to 52 (ANTYGVAVRVQGIAG). Residues 44–57 (AVRVQGIAGQPFVV) form an interaction with TJP1/ZO1 region. 8 positions are modified to phosphoserine: Ser86, Ser126, Ser128, Ser131, Ser146, Ser205, Ser208, and Ser324. Disordered stretches follow at residues 131-151 (SLLGPAPLGPGHRSTSLLELG) and 177-253 (DRHQ…SRAR). The span at 207–220 (DSRHLRDPPEDRRS) shows a compositional bias: basic and acidic residues. Residues 343 to 1110 (LAGQGELAQK…ALEKDSWRKA (768 aa)) are a coiled coil. The residue at position 562 (Lys562) is an N6-acetyllysine. 3 disordered regions span residues 755-796 (AQRG…QKRL), 823-861 (QSQLEDYKEKSRREVADAQRQAKEWASEAEKSSGGLSRL), and 1110-1131 (AARSAAESSLQQEGLSSDEEFD). Composition is skewed to basic and acidic residues over residues 772 to 796 (ALEEEGKQREALRRGKAELEEQKRL) and 827 to 853 (EDYKEKSRREVADAQRQAKEWASEAEK). A tail region spans residues 1111–1153 (ARSAAESSLQQEGLSSDEEFDGVYNPNSIASLLTESGLQTSSC). A compositionally biased stretch (polar residues) spans 1115–1124 (AESSLQQEGL). Phosphoserine is present on residues Ser1125 and Ser1126.

Belongs to the cingulin family. As to quaternary structure, homodimer. Interacts with TJP1/ZO1 and SPEF1.

The protein localises to the cell junction. It is found in the tight junction. Its function is as follows. Probably plays a role in the formation and regulation of the tight junction (TJ) paracellular permeability barrier. In Sorex araneus (Eurasian common shrew), this protein is Cingulin.